The following is a 144-amino-acid chain: Maximins 2/H8 type 1 (144 aa).

The N-terminal stretch at 1–18 (MNFKYIVAVSFLIASAYA) is a signal peptide. Positions 19–43 (RSEENEIQSLSQRDVLEEESLREMR) are excised as a propeptide. Asparagine 70 bears the Asparagine amide mark. Positions 74–123 (TAEEHEVMKRLETVMRDLDSLDYPEEASERETRGFNQEEIANLFTKKEKR) are excised as a propeptide. Position 143 is an isoleucine amide (isoleucine 143).

This sequence belongs to the bombinin family. Expressed by the skin glands.

It localises to the secreted. In terms of biological role, maximin-2 shows antibacterial activity against both Gram-positive and Gram-negative bacteria. It also shows antimicrobial activity against the fungus C.albicans, but not against A.flavus nor P.uticale. It has little hemolytic activity. Functionally, maximin-H8 shows antimicrobial activity against bacteria and against the fungus C.albicans. Shows strong hemolytic activity. In Bombina maxima (Giant fire-bellied toad), this protein is Maximins 2/H8 type 1.